The primary structure comprises 223 residues: Kynurenine formamidase (223 aa).

F34 contacts substrate. H64, H68, and D70 together coordinate Zn(2+). H74 (proton donor/acceptor) is an active-site residue. Residues H174 and E186 each contribute to the Zn(2+) site.

The protein belongs to the Cyclase 1 superfamily. KynB family. As to quaternary structure, homodimer. The cofactor is Zn(2+).

It catalyses the reaction N-formyl-L-kynurenine + H2O = L-kynurenine + formate + H(+). It functions in the pathway amino-acid degradation; L-tryptophan degradation via kynurenine pathway; L-kynurenine from L-tryptophan: step 2/2. Catalyzes the hydrolysis of N-formyl-L-kynurenine to L-kynurenine, the second step in the kynurenine pathway of tryptophan degradation. The protein is Kynurenine formamidase of Polaromonas naphthalenivorans (strain CJ2).